A 571-amino-acid polypeptide reads, in one-letter code: Urease subunit alpha (571 aa).

The region spanning 129-571 is the Urease domain; it reads GGIDTHIHFI…LPMAQRYFLF (443 aa). Positions 134, 136, and 217 each coordinate Ni(2+). N6-carboxylysine is present on Lys217. A substrate-binding site is contributed by His219. Residues His246 and His272 each coordinate Ni(2+). The Proton donor role is filled by His320. Asp360 serves as a coordination point for Ni(2+).

It belongs to the metallo-dependent hydrolases superfamily. Urease alpha subunit family. Heterotrimer of UreA (gamma), UreB (beta) and UreC (alpha) subunits. Three heterotrimers associate to form the active enzyme. Ni cation serves as cofactor. Carboxylation allows a single lysine to coordinate two nickel ions.

It localises to the cytoplasm. It carries out the reaction urea + 2 H2O + H(+) = hydrogencarbonate + 2 NH4(+). The protein operates within nitrogen metabolism; urea degradation; CO(2) and NH(3) from urea (urease route): step 1/1. In Cupriavidus pinatubonensis (strain JMP 134 / LMG 1197) (Cupriavidus necator (strain JMP 134)), this protein is Urease subunit alpha.